The chain runs to 215 residues: MGVTSGGLNFKDTVFNGQQRDIESTTTQVENQDVFFLTLLVQTVSNGSGGRFVNNTQDIQTSNGTSILGSLSLRIVEVSWDSDDSVIDLGSQVRFGSFLHLTQDHGGDLFWGKVLGFTLKFNLNLRLTVNIDQLEWEVLHVSLHFWVVEVSTDQTLSVENGIRRIHSSLILSSITNQSFSVSESDKRWSGSVTLIVGNNVHTIISKVSNTRVCCT.

This is an uncharacterized protein from Saccharomyces cerevisiae (strain ATCC 204508 / S288c) (Baker's yeast).